Reading from the N-terminus, the 183-residue chain is Large ribosomal subunit protein uL5 (183 aa).

The protein belongs to the universal ribosomal protein uL5 family. As to quaternary structure, part of the 50S ribosomal subunit; part of the 5S rRNA/L5/L18/L25 subcomplex. Contacts the 5S rRNA and the P site tRNA. Forms a bridge to the 30S subunit in the 70S ribosome.

This is one of the proteins that bind and probably mediate the attachment of the 5S RNA into the large ribosomal subunit, where it forms part of the central protuberance. In the 70S ribosome it contacts protein S13 of the 30S subunit (bridge B1b), connecting the 2 subunits; this bridge is implicated in subunit movement. Contacts the P site tRNA; the 5S rRNA and some of its associated proteins might help stabilize positioning of ribosome-bound tRNAs. The protein is Large ribosomal subunit protein uL5 of Kosmotoga olearia (strain ATCC BAA-1733 / DSM 21960 / TBF 19.5.1).